We begin with the raw amino-acid sequence, 383 residues long: Acetylornithine deacetylase (383 aa).

H80 is a binding site for Zn(2+). The active site involves D82. D112 is a Zn(2+) binding site. Residue E144 is part of the active site. Zn(2+)-binding residues include E145, E169, and H355.

This sequence belongs to the peptidase M20A family. ArgE subfamily. As to quaternary structure, homodimer. The cofactor is Zn(2+). Co(2+) serves as cofactor. Glutathione is required as a cofactor.

The protein resides in the cytoplasm. The enzyme catalyses N(2)-acetyl-L-ornithine + H2O = L-ornithine + acetate. The protein operates within amino-acid biosynthesis; L-arginine biosynthesis; L-ornithine from N(2)-acetyl-L-ornithine (linear): step 1/1. Catalyzes the hydrolysis of the amide bond of N(2)-acetylated L-amino acids. Cleaves the acetyl group from N-acetyl-L-ornithine to form L-ornithine, an intermediate in L-arginine biosynthesis pathway, and a branchpoint in the synthesis of polyamines. The protein is Acetylornithine deacetylase of Escherichia coli (strain K12 / MC4100 / BW2952).